We begin with the raw amino-acid sequence, 138 residues long: MENATVPNDQNEDYIDLTKPMSKSYWKKMKVKGFYRWVLVRDFKKINDILNTNEIVPILVSGAKTFTKSRFSAMRWSLNEFAFVDGFFFLLLFFFYKKKKRSKISNTSKRKKRTKKKRTRNLGNLCFLRKNLASILFF.

It localises to the plastid. The protein resides in the chloroplast. This is an uncharacterized protein from Chlorella vulgaris (Green alga).